A 600-amino-acid polypeptide reads, in one-letter code: Oligopeptide-binding protein OppA (600 aa).

An N-terminal signal peptide occupies residues 1–22 (MNKLKVTLLASSVVLAATLLSA). A lipid anchor (N-palmitoyl cysteine) is attached at C23. The S-diacylglycerol cysteine moiety is linked to residue C23.

This sequence belongs to the bacterial solute-binding protein 5 family. As to quaternary structure, the complex is composed of two ATP-binding proteins (OppD and OppF), two transmembrane proteins (OppB and OppC) and a solute-binding protein (OppA).

It localises to the cell membrane. In terms of biological role, part of the ABC transporter complex OppABCDF involved in the uptake of oligopeptides. The chain is Oligopeptide-binding protein OppA from Lactococcus lactis subsp. cremoris (strain SK11).